A 388-amino-acid chain; its full sequence is tRNA-specific adenosine deaminase 1 (388 aa).

The region spanning cysteine 63–isoleucine 388 is the A to I editase domain. Histidine 89 provides a ligand contact to Zn(2+). The Proton donor role is filled by glutamate 91. A 1D-myo-inositol hexakisphosphate-binding site is contributed by arginine 96. Positions 144 and 201 each coordinate Zn(2+). Positions 204, 357, and 363 each coordinate 1D-myo-inositol hexakisphosphate.

This sequence belongs to the ADAT1 family. The cofactor is 1D-myo-inositol hexakisphosphate. Zn(2+) is required as a cofactor.

It is found in the cytoplasm. The protein localises to the nucleus. The enzyme catalyses adenosine(37) in tRNA(Ala) + H2O + H(+) = inosine(37) in tRNA(Ala) + NH4(+). Its function is as follows. Deaminates adenosine-37 to inosine in tRNA-Ala. This Schizosaccharomyces pombe (strain 972 / ATCC 24843) (Fission yeast) protein is tRNA-specific adenosine deaminase 1.